The chain runs to 268 residues: Mitochondrial distribution and morphology protein 12 (268 aa).

In terms of domain architecture, SMP-LTD spans M1–N256. Residues L75 to E94 are disordered.

Belongs to the MDM12 family. As to quaternary structure, component of the ER-mitochondria encounter structure (ERMES) or MDM complex, composed of MMM1, MDM10, MDM12 and MDM34. An MMM1 homodimer associates with one molecule of MDM12 on each side in a pairwise head-to-tail manner, and the SMP-LTD domains of MMM1 and MDM12 generate a continuous hydrophobic tunnel for phospholipid trafficking.

The protein localises to the mitochondrion outer membrane. It is found in the endoplasmic reticulum membrane. In terms of biological role, component of the ERMES/MDM complex, which serves as a molecular tether to connect the endoplasmic reticulum (ER) and mitochondria. Components of this complex are involved in the control of mitochondrial shape and protein biogenesis, and function in nonvesicular lipid trafficking between the ER and mitochondria. MDM12 is required for the interaction of the ER-resident membrane protein MMM1 and the outer mitochondrial membrane-resident beta-barrel protein MDM10. The MDM12-MMM1 subcomplex functions in the major beta-barrel assembly pathway that is responsible for biogenesis of all mitochondrial outer membrane beta-barrel proteins, and acts in a late step after the SAM complex. The MDM10-MDM12-MMM1 subcomplex further acts in the TOM40-specific pathway after the action of the MDM12-MMM1 complex. Essential for establishing and maintaining the structure of mitochondria and maintenance of mtDNA nucleoids. The chain is Mitochondrial distribution and morphology protein 12 from Lachancea thermotolerans (strain ATCC 56472 / CBS 6340 / NRRL Y-8284) (Yeast).